Reading from the N-terminus, the 636-residue chain is DNA mismatch repair protein MutL (636 aa).

Over residues 332–344 (HAGEQGDSLRTDI) the composition is skewed to basic and acidic residues. Disordered regions lie at residues 332 to 360 (HAGE…PADN) and 417 to 443 (ASAP…SDDA). The segment covering 417 to 437 (ASAPADAAPAQASEPAAAPQA) has biased composition (low complexity).

It belongs to the DNA mismatch repair MutL/HexB family.

Its function is as follows. This protein is involved in the repair of mismatches in DNA. It is required for dam-dependent methyl-directed DNA mismatch repair. May act as a 'molecular matchmaker', a protein that promotes the formation of a stable complex between two or more DNA-binding proteins in an ATP-dependent manner without itself being part of a final effector complex. The polypeptide is DNA mismatch repair protein MutL (Ralstonia nicotianae (strain ATCC BAA-1114 / GMI1000) (Ralstonia solanacearum)).